We begin with the raw amino-acid sequence, 897 residues long: Interference hedgehog (897 aa).

Residues 1 to 26 (MSVTRGHKSTPSLLLLFLSVLTSLLA) form the signal peptide. Topologically, residues 27 to 702 (AIPVLQANAP…THNETFNMNP (676 aa)) are extracellular. 4 Ig-like C2-type domains span residues 40 to 147 (PGVR…ATIS), 148 to 235 (GDKI…RRLE), 244 to 336 (PSAA…YIQL), and 342 to 429 (PRIV…LQVN). Disulfide bonds link cysteine 63–cysteine 125, cysteine 169–cysteine 217, and cysteine 272–cysteine 320. Asparagine 96 and asparagine 99 each carry an N-linked (GlcNAc...) asparagine glycan. N-linked (GlcNAc...) asparagine glycans are attached at residues asparagine 296, asparagine 351, asparagine 393, and asparagine 467. Cysteine 363 and cysteine 411 are joined by a disulfide. The disordered stretch occupies residues 434–468 (QAGDGMGTGGMGRSSNRNAHNRKQKQMVPPSAPNV). Fibronectin type-III domains are found at residues 462 to 571 (PPSA…LQRG) and 579 to 674 (VPEL…TQRP). Residues arginine 498, lysine 504, and lysine 506 each coordinate heparin. The N-linked (GlcNAc...) asparagine glycan is linked to asparagine 530. Arginine 545 provides a ligand contact to heparin. A glycan (N-linked (GlcNAc...) asparagine) is linked at asparagine 561. Residues 666 to 682 (LKQGRTQRPRSSTTAQP) show a composition bias toward polar residues. The interval 666–694 (LKQGRTQRPRSSTTAQPTMHTVDTTTPTH) is disordered. Residues 683-694 (TMHTVDTTTPTH) show a composition bias toward low complexity. Asparagine 695 is a glycosylation site (N-linked (GlcNAc...) asparagine). The helical transmembrane segment at 703 to 723 (LLTGTISGGALLILLVISACL) threads the bilayer. At 724 to 897 (CLCKRRHSRG…SSGSLNSVGV (174 aa)) the chain is on the cytoplasmic side. 2 disordered regions span residues 773 to 793 (AQQQQQQLQQQHQQDEKDSQD) and 819 to 849 (MSSSSLRRSQRTLERAAAGGGSGGNNNNLNQ). Residues 774-784 (QQQQQQLQQQH) show a composition bias toward low complexity.

It belongs to the immunoglobulin superfamily. IHOG family. Homodimer. Heterotetramer; 2 iHog chains bind 2 hh chains when facilitated by heparin, heparin is required to promote high-affinity interactions between hh and iHog.

It is found in the membrane. Mediates response to the active Hedgehog (Hh) protein signal in embryos, functioning upstream or at the level of patched (ptc). This chain is Interference hedgehog, found in Drosophila mojavensis (Fruit fly).